Consider the following 450-residue polypeptide: Trehalose/maltose-binding protein MalE (450 aa).

The N-terminal stretch at 1–24 is a signal peptide; the sequence is MNVKKVLLGLFLVGVLGIAVVASG. Residues glutamate 57, threonine 84, arginine 89, aspartate 110, tyrosine 161, aspartate 163, tyrosine 217, glutamate 279, tryptophan 297, tyrosine 299, glycine 334, tryptophan 335, tryptophan 371, and arginine 404 each contribute to the alpha,alpha-trehalose site.

The protein belongs to the bacterial solute-binding protein 1 family. In terms of assembly, the complex is composed of two ATP-binding proteins (MalK), two transmembrane proteins (MalG and MalF) and a solute-binding protein (MalE). In terms of processing, glycosylated.

It localises to the cell membrane. Functionally, part of the ABC transporter complex MalEFGK involved in trehalose/maltose import. Binds maltose and trehalose. The chain is Trehalose/maltose-binding protein MalE (malE) from Thermococcus litoralis (strain ATCC 51850 / DSM 5473 / JCM 8560 / NS-C).